Consider the following 625-residue polypeptide: TRAF3-interacting protein 1 (625 aa).

Positions 1–322 (MNAAVVRRTQ…RKLSDGSFKD (322 aa)) are abolishes microtubules binding when missing. The segment at 130–439 (AGDKGDSRGR…DSQNSDNEDD (310 aa)) is disordered. Polar residues predominate over residues 141-152 (QRTSKAQEPNNK). Residues 153-327 (SGKEEESRIH…GSFKDVKAEM (175 aa)) show a composition bias toward basic and acidic residues. Residues 229–625 (RAKDRDRNNR…VHSINLSSRR (397 aa)) are DISC1-interaction domain. Phosphoserine occurs at positions 316 and 409. Over residues 420–434 (SGKTVSSVIIDSQNS) the composition is skewed to polar residues. Residues 472-600 (GLVKKILETK…IRDQQDKICA (129 aa)) adopt a coiled-coil conformation.

This sequence belongs to the TRAF3IP1 family. In terms of assembly, interacts with IL13RA1. Binds to microtubules, TRAF3 and DISC1. Component of the IFT complex B, at least composed of IFT20, IFT22, IFT25, IFT27, IFT46, IFT52, TRAF3IP1/IFT54, IFT57, IFT74, IFT80, IFT81, and IFT88. Interacts with IFT88. Interacts with MAP4.

Its subcellular location is the cytoplasm. The protein localises to the cytoskeleton. The protein resides in the cell projection. It localises to the cilium. It is found in the cilium axoneme. Its subcellular location is the cilium basal body. Plays an inhibitory role on IL13 signaling by binding to IL13RA1. Involved in suppression of IL13-induced STAT6 phosphorylation, transcriptional activity and DNA-binding. Recruits TRAF3 and DISC1 to the microtubules. Involved in epithelial morphogenesis and in the regulation of microtubule cytoskeleton organization. Is a negative regulator of microtubule stability, acting through the control of MAP4 levels. Involved in ciliogenesis. This is TRAF3-interacting protein 1 (Traf3ip1) from Mus musculus (Mouse).